The chain runs to 471 residues: Phosphatidylserine synthase 1 (471 aa).

Ala-2 bears the N-acetylalanine mark. Residues 2–35 (ASCVGSRTLSKDDVNYRMHFRMINEQQVEDITID) are Cytoplasmic-facing. The chain crosses the membrane as a helical span at residues 36–56 (FFYRPHTITLLSFTIVSLMYF). The Lumenal portion of the chain corresponds to 57–72 (AFTRDDSVPEDNIWRG). Residues 73-93 (ILSVIFFFLIISVLAFPNGPF) traverse the membrane as a helical segment. Topologically, residues 94-102 (TRPHPALWR) are cytoplasmic. Residues 103 to 123 (MVFGLSVLYFLFLVFLLFLNF) form a helical membrane-spanning segment. Residues 124–160 (EQVKSLMYWLDPNLRYATREADIMEYAVNCHVITWER) lie on the Lumenal side of the membrane. A helical membrane pass occupies residues 161–181 (IVSHFDIFAFGHFWGWAMKAL). Over 182 to 186 (LIRSY) the chain is Cytoplasmic. The helical transmembrane segment at 187 to 207 (GLCWTISITWELTELFFMHLL) threads the bilayer. Topologically, residues 208–216 (PNFAECWWD) are lumenal. A helical transmembrane segment spans residues 217–237 (QVILDILLCNGGGIWLGMVVC). The Cytoplasmic segment spans residues 238 to 286 (RFLEMRTYHWASFKDIHTTTGKIKRAVLQFTPASWTYVRWFDPKSSFQR). Residues 287–307 (VAGVYLFMIIWQLTELNTFFL) form a helical membrane-spanning segment. Residues 308-309 (KH) are Lumenal-facing. Residues 310-330 (IFVFQASHPLSWCRILFIGCI) form a helical membrane-spanning segment. The Cytoplasmic portion of the chain corresponds to 331 to 355 (TAPTVRQYYAYLTDTQCKRVGTQCW). A helical transmembrane segment spans residues 356-376 (VFGVIGFLEAIVCIKFGQDLF). Over 377–380 (SKTQ) the chain is Lumenal. The chain crosses the membrane as a helical span at residues 381–401 (ILYVVFWLLCVAFTTFLCLYG). The Cytoplasmic portion of the chain corresponds to 402-471 (MVWYAEHYGH…SKVTNGVGKK (70 aa)). 3 positions are modified to phosphoserine: Ser-417, Ser-440, and Ser-452. The segment at 426-471 (ISWHHGKGSKGSEDSPPKHSSNNESHSSRRRNRHSKSKVTNGVGKK) is disordered. Residues 453-462 (SRRRNRHSKS) are compositionally biased toward basic residues.

It belongs to the phosphatidyl serine synthase family.

The protein resides in the endoplasmic reticulum membrane. The enzyme catalyses a 1,2-diacyl-sn-glycero-3-phosphoethanolamine + L-serine = a 1,2-diacyl-sn-glycero-3-phospho-L-serine + ethanolamine. It carries out the reaction a 1,2-diacyl-sn-glycero-3-phosphocholine + L-serine = a 1,2-diacyl-sn-glycero-3-phospho-L-serine + choline. Its pathway is phospholipid metabolism; phosphatidylserine biosynthesis. Its activity is regulated as follows. Inhibited by exogenous phosphatidylserine. Catalyzes a base-exchange reaction in which the polar head group of phosphatidylethanolamine (PE) or phosphatidylcholine (PC) is replaced by L-serine. Catalyzes mainly the conversion of phosphatidylcholine. Also converts, in vitro and to a lesser extent, phosphatidylethanolamine. The sequence is that of Phosphatidylserine synthase 1 (PTDSS1) from Cricetulus griseus (Chinese hamster).